Consider the following 120-residue polypeptide: Large ribosomal subunit protein eL18 (120 aa).

It belongs to the eukaryotic ribosomal protein eL18 family.

The chain is Large ribosomal subunit protein eL18 from Thermococcus onnurineus (strain NA1).